We begin with the raw amino-acid sequence, 203 residues long: Large ribosomal subunit protein bL25 (203 aa).

Belongs to the bacterial ribosomal protein bL25 family. CTC subfamily. In terms of assembly, part of the 50S ribosomal subunit; part of the 5S rRNA/L5/L18/L25 subcomplex. Contacts the 5S rRNA. Binds to the 5S rRNA independently of L5 and L18.

In terms of biological role, this is one of the proteins that binds to the 5S RNA in the ribosome where it forms part of the central protuberance. This is Large ribosomal subunit protein bL25 from Cellvibrio japonicus (strain Ueda107) (Pseudomonas fluorescens subsp. cellulosa).